Reading from the N-terminus, the 187-residue chain is ADP-ribosylation factor-like protein 9 (187 aa).

GTP-binding positions include 25 to 32 (GLDGAGKT), 69 to 73 (EIGGS), and 126 to 129 (NKQD).

The protein belongs to the small GTPase superfamily. Arf family.

This is ADP-ribosylation factor-like protein 9 (ARL9) from Homo sapiens (Human).